The sequence spans 161 residues: Arachidonate 5-lipoxygenase-activating protein (161 aa).

At 1–8 (MDQETVGN) the chain is on the lumenal side. A helical membrane pass occupies residues 9–30 (VVLLAIVTLISVVQNGFFAHKV). At 31–52 (EHESRTQNGRSFQRTGTLAFER) the chain is on the cytoplasmic side. Residues 53–77 (VYTANQNCVDAYPTFLAVLWSAGLL) form a helical membrane-spanning segment. Residues 78–80 (CSQ) lie on the Lumenal side of the membrane. Residues 81-102 (VPAAFAGLMYLLVRQKYFVGYL) form a helical membrane-spanning segment. Residues 103-107 (GERTQ) lie on the Cytoplasmic side of the membrane. Residues 108-115 (STPGYIFG) lie within the membrane without spanning it. A helical membrane pass occupies residues 116–128 (KRIILFLFLMSVA). At 129–161 (GIFNYYLIFFFGSDFENYIKTVTTTISPLLLIP) the chain is on the lumenal side.

The protein belongs to the MAPEG family. Homotrimer. Interacts with LTC4S and ALOX5.

It localises to the nucleus membrane. Its subcellular location is the endoplasmic reticulum membrane. Functionally, required for leukotriene biosynthesis by ALOX5 (5-lipoxygenase). Anchors ALOX5 to the membrane. Binds arachidonic acid, and could play an essential role in the transfer of arachidonic acid to ALOX5. Binds to MK-886, a compound that blocks the biosynthesis of leukotrienes. The sequence is that of Arachidonate 5-lipoxygenase-activating protein (ALOX5AP) from Macaca fascicularis (Crab-eating macaque).